Consider the following 652-residue polypeptide: MKERMNELVQLLNQYAREYYTKDNPSVSDAEYDKLYRELVELEKEFPEDILPNSPTHRVGDLVLDGFEKYRHEYPLFSLQDAFSREELDAFDRRIKAEFPQADYLAELKIDGLSISLTYVNGRLRVGATRGDGTVGENITENLKRVRDIPLHLPENIDLTVRGECYLPKASFKTINAERRENGETEFANPRNAAAGTLRQLDTKVVAKRKLATFIYQEAGPTAASSQEAVLESFAKLGFTVNPRHIISSSMDAIWQFIEDVAKERAELAYDIDGVVIKVNSLALQEALGFTVKAPRWAIAYKFPAEEKTAEILSVDWTVGRTGVVTPTANLTPVQLAGTTVSRATLHNVDYIAEKDIRIGDIVVVYKAGDIIPAVLHVVENKRDQQVPLPIPTVCPSCQSELIHFEDEVALRCVNPRCPAQLKEKLIHFASRDAMNIIGLGPAIVEKLFTAELICDVADIYQLTPENLMQLEGIKEKSATKLYKAIQASKANSAEKLLFGLGIRHVGSKASRLLMERFESLEQLAAADFDDIAAIDGLGIVIAESLKTYFATAGAQKLLIELKTAGLNLTYLGKKTASDAALTGMTIVLTGKLANLTRSQAKEKLQSLGANVAGSVSKKTSLVIAGSDAGSKLEKAKTLGIEIKDEAWLESL.

NAD(+) is bound by residues 29–33, 78–79, and E107; these read DAEYD and SL. K109 acts as the N6-AMP-lysine intermediate in catalysis. The NAD(+) site is built by R130, E164, K278, and K302. Zn(2+) is bound by residues C395, C398, C413, and C418. Residues 577–652 form the BRCT domain; that stretch reads ASDAALTGMT…IKDEAWLESL (76 aa).

This sequence belongs to the NAD-dependent DNA ligase family. LigA subfamily. Requires Mg(2+) as cofactor. Mn(2+) serves as cofactor.

It carries out the reaction NAD(+) + (deoxyribonucleotide)n-3'-hydroxyl + 5'-phospho-(deoxyribonucleotide)m = (deoxyribonucleotide)n+m + AMP + beta-nicotinamide D-nucleotide.. DNA ligase that catalyzes the formation of phosphodiester linkages between 5'-phosphoryl and 3'-hydroxyl groups in double-stranded DNA using NAD as a coenzyme and as the energy source for the reaction. It is essential for DNA replication and repair of damaged DNA. This chain is DNA ligase, found in Streptococcus mutans serotype c (strain ATCC 700610 / UA159).